Consider the following 132-residue polypeptide: Small ribosomal subunit protein uS8 (132 aa).

The protein belongs to the universal ribosomal protein uS8 family. Part of the 30S ribosomal subunit. Contacts proteins S5 and S12.

Functionally, one of the primary rRNA binding proteins, it binds directly to 16S rRNA central domain where it helps coordinate assembly of the platform of the 30S subunit. This chain is Small ribosomal subunit protein uS8, found in Chelativorans sp. (strain BNC1).